Reading from the N-terminus, the 122-residue chain is Urease subunit beta (122 aa).

The protein belongs to the urease beta subunit family. Heterotrimer of UreA (gamma), UreB (beta) and UreC (alpha) subunits. Three heterotrimers associate to form the active enzyme.

The protein resides in the cytoplasm. It carries out the reaction urea + 2 H2O + H(+) = hydrogencarbonate + 2 NH4(+). It functions in the pathway nitrogen metabolism; urea degradation; CO(2) and NH(3) from urea (urease route): step 1/1. This Lysinibacillus sphaericus (strain C3-41) protein is Urease subunit beta.